An 830-amino-acid chain; its full sequence is Envelope glycoprotein B (830 aa).

An N-terminal signal peptide occupies residues 1 to 22; it reads MSKMAVLFLAVFLMNSVLMIYC. The Virion surface portion of the chain corresponds to 23–688; sequence DPDHYIRAGY…GGVVSFLKNP (666 aa). 4 cysteine pairs are disulfide-bonded: C41-C482, C58-C438, C131-C197, and C290-C337. Residues 98–104 form an involved in fusion and/or binding to host membrane region; sequence SYRDVGV. N-linked (GlcNAc...) asparagine; by host glycosylation occurs at N155. Residues 184-191 are involved in fusion and/or binding to host membrane; sequence GPLWLYST. N-linked (GlcNAc...) asparagine; by host glycans are attached at residues N228, N247, N286, N307, N329, N355, N361, and N486. An intrachain disulfide couples C510 to C548. Hydrophobic membrane proximal region regions lie at residues 634–686 and 644–685; these read IEAK…SFLK and SYVN…VSFL. The chain crosses the membrane as a helical span at residues 689 to 709; the sequence is FGGGLMLILAIVVVVIIIVVF. Residues 710-830 are Intravirion-facing; the sequence is VRQRHVLSKP…GYKSVNVEEA (121 aa). The Internalization motif signature appears at 822 to 825; it reads YKSV.

It belongs to the herpesviridae glycoprotein B family. Homotrimer; disulfide-linked. Binds to heparan sulfate proteoglycans. Interacts with gH/gL heterodimer. Post-translationally, a proteolytic cleavage by host furin generates two subunits that remain linked by disulfide bonds.

It is found in the virion membrane. Its subcellular location is the host cell membrane. It localises to the host endosome membrane. The protein localises to the host Golgi apparatus membrane. In terms of biological role, envelope glycoprotein that forms spikes at the surface of virion envelope. Essential for the initial attachment to heparan sulfate moieties of the host cell surface proteoglycans. Involved in fusion of viral and cellular membranes leading to virus entry into the host cell. Following initial binding to its host receptors, membrane fusion is mediated by the fusion machinery composed at least of gB and the heterodimer gH/gL. May be involved in the fusion between the virion envelope and the outer nuclear membrane during virion egress. This Human herpesvirus 6A (strain Uganda-1102) (HHV-6 variant A) protein is Envelope glycoprotein B.